The following is a 142-amino-acid chain: Hemoglobin subunit alpha (142 aa).

In terms of domain architecture, Globin spans 2-142 (VLSAADKGHV…VSTVLTSKYR (141 aa)). The residue at position 4 (S4) is a Phosphoserine. N6-succinyllysine occurs at positions 8 and 12. K17 is subject to N6-acetyllysine; alternate. An N6-succinyllysine; alternate modification is found at K17. At Y25 the chain carries Phosphotyrosine. A Phosphoserine modification is found at S36. K41 carries the N6-succinyllysine modification. S50 bears the Phosphoserine mark. H59 lines the O2 pocket. H88 provides a ligand contact to heme b. Phosphoserine is present on S103. The residue at position 109 (T109) is a Phosphothreonine. S125 is modified (phosphoserine). Phosphothreonine occurs at positions 135 and 138. S139 carries the phosphoserine modification.

This sequence belongs to the globin family. As to quaternary structure, heterotetramer of two alpha chains and two beta chains. In terms of tissue distribution, red blood cells.

In terms of biological role, involved in oxygen transport from the lung to the various peripheral tissues. Its function is as follows. Hemopressin acts as an antagonist peptide of the cannabinoid receptor CNR1. Hemopressin-binding efficiently blocks cannabinoid receptor CNR1 and subsequent signaling. This Notamacropus eugenii (Tammar wallaby) protein is Hemoglobin subunit alpha (HBA).